A 557-amino-acid chain; its full sequence is MRSDVIKKGYTRAPHRSLLRATGLKDEDFSKPFIGVANSFIEIIPGHFFLNKYAEILKDEIRKNGCVPFEFNTIGVDDGIAMGHGGMLYSLPSREIIANSIETVMNAHALDALVCMPNCDKIVPGMVMGALRVNVPTIFVSGGPMRKGYTKSGQPIDLATAFEAVGKFETKEISEEELKEIECNACPSGGSCSGMFTANSMNTLCEAMGIALSGNGTILALTKEREELIRRAGRRICEIALDERFKIRNILNEKAVRNALVVDMAMGGSSNTVLHMLAISREAGVNLQISQLNKISQNIAHIAKISPSLPNVHMEDIGRAGGMNAVIKEISRRDNGMLHLENLTVSGETLGERVGLSEIKDESVIHKVENAYSKVGGLAILFGNLAEQGCVIKTAGIVGERKFSGKAVCFNSQDEAIAGISSGKVGKGDVVVIRYEGPRGGPGMQEMLSPTSLIMGRGLGADVALITDGRFSGATRGLSIGHISPEAAEGGMIGLLRDGDIIDIDVDTYSINVRLSEAETLKRKAEFKPVQKELKGKWLRQYQRLVTNASNGAILEA.

Asp78 contributes to the Mg(2+) binding site. Cys119 contacts [2Fe-2S] cluster. Residues Asp120 and Lys121 each contribute to the Mg(2+) site. N6-carboxylysine is present on Lys121. Cys192 lines the [2Fe-2S] cluster pocket. Glu446 contacts Mg(2+). The Proton acceptor role is filled by Ser472.

It belongs to the IlvD/Edd family. Homodimer. [2Fe-2S] cluster is required as a cofactor. Requires Mg(2+) as cofactor.

The enzyme catalyses (2R)-2,3-dihydroxy-3-methylbutanoate = 3-methyl-2-oxobutanoate + H2O. The catalysed reaction is (2R,3R)-2,3-dihydroxy-3-methylpentanoate = (S)-3-methyl-2-oxopentanoate + H2O. Its pathway is amino-acid biosynthesis; L-isoleucine biosynthesis; L-isoleucine from 2-oxobutanoate: step 3/4. The protein operates within amino-acid biosynthesis; L-valine biosynthesis; L-valine from pyruvate: step 3/4. Functions in the biosynthesis of branched-chain amino acids. Catalyzes the dehydration of (2R,3R)-2,3-dihydroxy-3-methylpentanoate (2,3-dihydroxy-3-methylvalerate) into 2-oxo-3-methylpentanoate (2-oxo-3-methylvalerate) and of (2R)-2,3-dihydroxy-3-methylbutanoate (2,3-dihydroxyisovalerate) into 2-oxo-3-methylbutanoate (2-oxoisovalerate), the penultimate precursor to L-isoleucine and L-valine, respectively. The chain is Dihydroxy-acid dehydratase from Campylobacter curvus (strain 525.92).